Consider the following 394-residue polypeptide: Aspergillopepsin-1 (394 aa).

A signal peptide spans 1–20 (MVVFSKVTAAVFGLATIASA). Residues 21–69 (APAPPTRKGFTVQQQARPAQKKQVNLPAMYAHALTKFGGSVPESVKVAA) constitute a propeptide, activation peptide. A Peptidase A1 domain is found at 85 to 391 (YLTPVNVGGT…DSEGPRLGFA (307 aa)). Active-site residues include Asp101 and Asp283. Cys319 and Cys354 are oxidised to a cystine.

Belongs to the peptidase A1 family. As to quaternary structure, monomer.

The protein localises to the secreted. It carries out the reaction Hydrolysis of proteins with broad specificity. Generally favors hydrophobic residues in P1 and P1', but also accepts Lys in P1, which leads to activation of trypsinogen. Does not clot milk.. In terms of biological role, secreted aspartic endopeptidase that allows assimilation of proteinaceous substrates. The scissile peptide bond is attacked by a nucleophilic water molecule activated by two aspartic residues in the active site. Shows a broad primary substrate specificity. Favors hydrophobic residues at the P1 and P1' positions, but also accepts a lysine residue in the P1 position, leading to the activation of trypsinogen and chymotrypsinogen A. This chain is Aspergillopepsin-1 (pepA), found in Aspergillus clavatus (strain ATCC 1007 / CBS 513.65 / DSM 816 / NCTC 3887 / NRRL 1 / QM 1276 / 107).